Here is a 124-residue protein sequence, read N- to C-terminus: Late embryogenesis abundant protein 37 (124 aa).

The transit peptide at 1–35 (MSQSLFNLKSLSRSINNTIRMRRYIVITKASQRAY) directs the protein to the mitochondrion.

Belongs to the LEA type 3 family.

Its subcellular location is the mitochondrion. The polypeptide is Late embryogenesis abundant protein 37 (Arabidopsis thaliana (Mouse-ear cress)).